A 278-amino-acid polypeptide reads, in one-letter code: Type II restriction enzyme NgoPII (278 aa).

The protein belongs to the NgoPII type II restriction endonuclease family.

The enzyme catalyses Endonucleolytic cleavage of DNA to give specific double-stranded fragments with terminal 5'-phosphates.. In terms of biological role, a P subtype restriction enzyme that recognizes the double-stranded sequence 5'-GGCC-3' and cleaves after G-2. In Neisseria gonorrhoeae, this protein is Type II restriction enzyme NgoPII (ngoPIIR).